We begin with the raw amino-acid sequence, 259 residues long: PKHD-type hydroxylase PsycPRwf_1523 (259 aa).

The Fe2OG dioxygenase domain occupies 80–180; the sequence is VIMPPLFSAY…RLAMVTWVQS (101 aa). His-98, Asp-100, and His-161 together coordinate Fe cation. Arg-171 contacts 2-oxoglutarate.

Fe(2+) is required as a cofactor. Requires L-ascorbate as cofactor.

The protein is PKHD-type hydroxylase PsycPRwf_1523 of Psychrobacter sp. (strain PRwf-1).